Reading from the N-terminus, the 120-residue chain is Large ribosomal subunit protein uL18 (120 aa).

Belongs to the universal ribosomal protein uL18 family. As to quaternary structure, part of the 50S ribosomal subunit; part of the 5S rRNA/L5/L18/L25 subcomplex. Contacts the 5S and 23S rRNAs.

This is one of the proteins that bind and probably mediate the attachment of the 5S RNA into the large ribosomal subunit, where it forms part of the central protuberance. The polypeptide is Large ribosomal subunit protein uL18 (Bartonella quintana (strain Toulouse) (Rochalimaea quintana)).